A 66-amino-acid polypeptide reads, in one-letter code: Sodium channel alpha-toxin Acra8 (66 aa).

The LCN-type CS-alpha/beta domain occupies 2 to 64 (RDGYIVDDKN…VPIKEKGRCN (63 aa)). 4 cysteine pairs are disulfide-bonded: C12–C63, C16–C36, C22–C46, and C26–C48. Residue N64 is modified to Asparagine amide. Positions 65–66 (GR) are excised as a propeptide.

It belongs to the long (4 C-C) scorpion toxin superfamily. Sodium channel inhibitor family. Alpha subfamily. Expressed by the venom gland.

It is found in the secreted. Its function is as follows. Alpha toxins bind voltage-independently at site-3 of sodium channels (Nav) and inhibit the inactivation of the activated channels, thereby blocking neuronal transmission. The sequence is that of Sodium channel alpha-toxin Acra8 from Androctonus crassicauda (Arabian fat-tailed scorpion).